A 454-amino-acid polypeptide reads, in one-letter code: Ribosomal protein uS12 methylthiotransferase RimO (454 aa).

The MTTase N-terminal domain maps to 14 to 125; that stretch reads SKVAFSHVGC…IAKVLDRVEK (112 aa). 6 residues coordinate [4Fe-4S] cluster: C23, C59, C88, C163, C167, and C170. A Radical SAM core domain is found at 149 to 378; it reads DKNKFVAYLR…ISVQQNISKD (230 aa). Residues 381-452 enclose the TRAM domain; sequence QSYVGSKMKI…EYDLYGETLK (72 aa).

This sequence belongs to the methylthiotransferase family. RimO subfamily. It depends on [4Fe-4S] cluster as a cofactor.

It localises to the cytoplasm. The enzyme catalyses L-aspartate(89)-[ribosomal protein uS12]-hydrogen + (sulfur carrier)-SH + AH2 + 2 S-adenosyl-L-methionine = 3-methylsulfanyl-L-aspartate(89)-[ribosomal protein uS12]-hydrogen + (sulfur carrier)-H + 5'-deoxyadenosine + L-methionine + A + S-adenosyl-L-homocysteine + 2 H(+). In terms of biological role, catalyzes the methylthiolation of an aspartic acid residue of ribosomal protein uS12. The sequence is that of Ribosomal protein uS12 methylthiotransferase RimO from Prochlorococcus marinus (strain MIT 9215).